Consider the following 459-residue polypeptide: ATP synthase subunit beta (459 aa).

148–155 (GGAGVGKT) serves as a coordination point for ATP.

The protein belongs to the ATPase alpha/beta chains family. F-type ATPases have 2 components, CF(1) - the catalytic core - and CF(0) - the membrane proton channel. CF(1) has five subunits: alpha(3), beta(3), gamma(1), delta(1), epsilon(1). CF(0) has three main subunits: a(1), b(2) and c(9-12). The alpha and beta chains form an alternating ring which encloses part of the gamma chain. CF(1) is attached to CF(0) by a central stalk formed by the gamma and epsilon chains, while a peripheral stalk is formed by the delta and b chains.

It localises to the cell inner membrane. It carries out the reaction ATP + H2O + 4 H(+)(in) = ADP + phosphate + 5 H(+)(out). Its function is as follows. Produces ATP from ADP in the presence of a proton gradient across the membrane. The catalytic sites are hosted primarily by the beta subunits. This Thioalkalivibrio sulfidiphilus (strain HL-EbGR7) protein is ATP synthase subunit beta.